A 393-amino-acid chain; its full sequence is Endoglucanase 1 (393 aa).

The N-terminal stretch at 1–26 (MAFKLNIGLLALSLSLSLVHLDGVRA) is a signal peptide. Asp34 (nucleophile) is an active-site residue. Asp152 (proton donor) is an active-site residue. The segment at 233–393 (GCQRKDDNTI…GGHKKCHKKH (161 aa)) is disordered. Composition is skewed to low complexity over residues 319-329 (QGSSNGDATTG) and 337-370 (DSGS…NPGA). Asn343 carries N-linked (GlcNAc...) asparagine glycosylation. A compositionally biased stretch (gly residues) spans 371–384 (AQGGQGGAQPGPSG).

Belongs to the glycosyl hydrolase 45 (cellulase K) family. Post-translationally, may also be O-glycosylated. Hyphal tip.

The protein localises to the secreted. It carries out the reaction Endohydrolysis of (1-&gt;4)-beta-D-glucosidic linkages in cellulose, lichenin and cereal beta-D-glucans.. The sequence is that of Endoglucanase 1 (EGL1) from Mycosarcoma maydis (Corn smut fungus).